A 474-amino-acid chain; its full sequence is Recombinase Flp protein (474 aa).

The Tyr recombinase Flp-type domain maps to 135–421 (LSNNVGAEIS…LYLYTYAQQK (287 aa)). Tyrosine 342 (O-(3'-phospho-DNA)-tyrosine intermediate) is an active-site residue. The interval 426 to 474 (ADPNEQNRLFSSESPAHPFLTPQSTGSSTPLTWTAPKTLSTGLMTPGEE) is disordered. 2 stretches are compositionally biased toward polar residues: residues 429–439 (NEQNRLFSSES) and 446–468 (TPQS…STGL).

The protein belongs to the 'phage' integrase family.

Catalyzes the recombination between the large inverted repetitions of the plasmid. The sequence is that of Recombinase Flp protein from Zygosaccharomyces bailii.